Consider the following 353-residue polypeptide: MNGTEGPYFYIPMVNTTGIVRSPYEYPQYYLVNPAAYAALGAYMFLLILLGFPINFLTLYVTIEHKKLRTPLNYILLNLAVANLFMVFGGFTTTMYTSMHGYFVLGRLGCNLEGFFATLGGEIALWSLVVLAVERWMVVCKPISNFRFGENHAIMGLAFTWVMASACAVPPLVGWSRYIPEGMQCSCGIDYYTRAEGFNNESFVIYMFVCHFLIPLVVVFFCYGRLLCAVKEAAAAQQESETTQRAEREVSRMVVIMVVAFLICWCPYAGVAWYIFTHQGSEFGPLFMTFPAFFAKSSSIYNPMIYICMNKQFRHCMITTLCCGKNPFEEEEGASTTSKTEASSVSSSSVSPA.

Residues 1–36 (MNGTEGPYFYIPMVNTTGIVRSPYEYPQYYLVNPAA) lie on the Extracellular side of the membrane. N-linked (GlcNAc...) asparagine glycans are attached at residues Asn-2 and Asn-15. Residues 37–61 (YAALGAYMFLLILLGFPINFLTLYV) traverse the membrane as a helical segment. At 62 to 73 (TIEHKKLRTPLN) the chain is on the cytoplasmic side. A helical membrane pass occupies residues 74–96 (YILLNLAVANLFMVFGGFTTTMY). Over 97 to 110 (TSMHGYFVLGRLGC) the chain is Extracellular. Cys-110 and Cys-187 are joined by a disulfide. A helical transmembrane segment spans residues 111–133 (NLEGFFATLGGEIALWSLVVLAV). The 'Ionic lock' involved in activated form stabilization motif lies at 134–136 (ERW). Topologically, residues 134-152 (ERWMVVCKPISNFRFGENH) are cytoplasmic. Residues 153–173 (AIMGLAFTWVMASACAVPPLV) form a helical membrane-spanning segment. Residues 174 to 202 (GWSRYIPEGMQCSCGIDYYTRAEGFNNES) are Extracellular-facing. N-linked (GlcNAc...) asparagine glycosylation is present at Asn-200. A helical membrane pass occupies residues 203–224 (FVIYMFVCHFLIPLVVVFFCYG). Residues 225–252 (RLLCAVKEAAAAQQESETTQRAEREVSR) lie on the Cytoplasmic side of the membrane. Residues 253–274 (MVVIMVVAFLICWCPYAGVAWY) traverse the membrane as a helical segment. The Extracellular segment spans residues 275 to 286 (IFTHQGSEFGPL). Residues 287-308 (FMTFPAFFAKSSSIYNPMIYIC) form a helical membrane-spanning segment. The residue at position 296 (Lys-296) is an N6-(retinylidene)lysine. The Cytoplasmic portion of the chain corresponds to 309–353 (MNKQFRHCMITTLCCGKNPFEEEEGASTTSKTEASSVSSSSVSPA). S-palmitoyl cysteine attachment occurs at residues Cys-322 and Cys-323. Residues 330-353 (EEEGASTTSKTEASSVSSSSVSPA) form a disordered region. Positions 334–353 (ASTTSKTEASSVSSSSVSPA) are enriched in low complexity.

This sequence belongs to the G-protein coupled receptor 1 family. Opsin subfamily. In terms of processing, phosphorylated on some or all of the serine and threonine residues present in the C-terminal region. Contains one covalently linked retinal chromophore.

The protein resides in the membrane. It localises to the cell projection. The protein localises to the cilium. It is found in the photoreceptor outer segment. In terms of biological role, photoreceptor required for image-forming vision at low light intensity. While most salt water fish species use retinal as chromophore, most freshwater fish use 3-dehydroretinal, or a mixture of retinal and 3-dehydroretinal. Light-induced isomerization of 11-cis to all-trans retinal triggers a conformational change that activates signaling via G-proteins. Subsequent receptor phosphorylation mediates displacement of the bound G-protein alpha subunit by arrestin and terminates signaling. The sequence is that of Rhodopsin (rho) from Mugil cephalus (Flathead mullet).